The chain runs to 461 residues: Coronin-1A (461 aa).

The residue at position 2 (S2) is an N-acetylserine. S2 carries the phosphoserine; by PKC modification. WD repeat units lie at residues 13-63, 73-110, 123-160, 164-204, 207-251, 258-296, and 302-349; these read HVFG…LVLP, NAPT…MVWE, PVVT…MVWD, GAAM…RIIE, KGTV…ALWD, PLSL…RYFE, and PFLH…EPIA. Residues 403–418 are compositionally biased toward basic and acidic residues; that stretch reads ELRVNRGLDTGRRRAA. The tract at residues 403–432 is disordered; it reads ELRVNRGLDTGRRRAAPEASGTPSSDAVSR. T412 is subject to Phosphothreonine; by PKC. Position 422 is a phosphoserine (S422). A coiled-coil region spans residues 424–460; the sequence is TPSSDAVSRLEEEMRKLQATVQELQKRLDRLEETVQA. K449 is subject to N6-acetyllysine.

It belongs to the WD repeat coronin family. As to quaternary structure, binds actin. In terms of processing, phosphorylation at Thr-412 by PKC strongly down-regulates the association with actin. Polyubiquitinated by RNF128 with 'Lys-48'-linked chains, leading to proteasomal degradation. As to expression, expressed in brain, thymus, spleen, bone marrow and lymph node. Low in lung and gut.

The protein localises to the cytoplasm. It localises to the cytoskeleton. The protein resides in the cell cortex. It is found in the cytoplasmic vesicle. Its subcellular location is the phagosome membrane. May be a crucial component of the cytoskeleton of highly motile cells, functioning both in the invagination of large pieces of plasma membrane, as well as in forming protrusions of the plasma membrane involved in cell locomotion. In mycobacteria-infected cells, its retention on the phagosomal membrane prevents fusion between phagosomes and lysosomes. This is Coronin-1A (CORO1A) from Homo sapiens (Human).